Here is a 747-residue protein sequence, read N- to C-terminus: Meprin A subunit alpha (747 aa).

A signal peptide spans 1–20 (MLWIQPACLLSLIFSAHIAA). Positions 21–64 (VSIKHLLNGSDHDTDVGEQKDIFEINLAAGLNLFQGDILLPRTR) are excised as a propeptide. 2 N-linked (GlcNAc...) asparagine glycosylation sites follow: asparagine 28 and asparagine 139. Positions 65–259 (NAMRDPSSRW…IRLNRMYNCT (195 aa)) constitute a Peptidase M12A domain. The Extracellular portion of the chain corresponds to 65–713 (NAMRDPSSRW…FYAGERCQAM (649 aa)). Disulfide bonds link cysteine 106–cysteine 258, cysteine 127–cysteine 146, and cysteine 268–cysteine 430. Histidine 154 contacts Zn(2+). Glutamate 155 is a catalytic residue. Zn(2+) contacts are provided by histidine 158 and histidine 164. Asparagine 221, asparagine 257, asparagine 317, asparagine 413, asparagine 439, asparagine 533, and asparagine 540 each carry an N-linked (GlcNAc...) asparagine glycan. In terms of domain architecture, MAM spans 263–432 (TLLDHCDFEK…ITLTETPCPA (170 aa)). One can recognise an MATH domain in the interval 433–594 (GVWTIRNISQ…GDSLIIFVDF (162 aa)). A disordered region spans residues 638 to 663 (ESLPSSLGQRHPSRQKRSVENTGPME). An EGF-like domain is found at 671 to 711 (FRDPCDPNPCQNEGTCVNVKGMASCRCVSGHAFFYAGERCQ). Cystine bridges form between cysteine 675–cysteine 686, cysteine 680–cysteine 695, and cysteine 697–cysteine 710. A helical membrane pass occupies residues 714–741 (HVHGSLLGLLIGCIAGLIFLTFVTFSTT). The Cytoplasmic portion of the chain corresponds to 742–747 (NGKLRQ).

Homotetramer consisting of disulfide-linked alpha subunits, homooligomer consisting of disulfide-linked alpha subunit homodimers, or heterotetramer of two alpha and two beta subunits formed by non-covalent association of two disulfide-linked heterodimers. Genetic factors determine which oligomer(s) will be formed (strain-specific). Interacts with MBL2 through its carbohydrate moiety. This interaction may inhibit its catalytic activity. Zn(2+) is required as a cofactor. Post-translationally, N-glycosylated; contains GlcNAc, galactose, mannose and a small amount of fucose. As to expression, kidney, intestinal brush borders and salivary ducts.

It localises to the membrane. It catalyses the reaction Hydrolysis of protein and peptide substrates preferentially on carboxyl side of hydrophobic residues.. With respect to regulation, inhibited by metal ion chelators EDTA and 1,10-phenanthroline, bradykinin analogs, cysteine, CONA65, and several hydroxamate compounds, particularly tyrosine hydroxamate. Not inhibited by 3,4-dichloroisocourmarin, soybean trypsin inhibitor, or the cysteine proteinase inhibitors iodoacetic acid and E-64. The polypeptide is Meprin A subunit alpha (Mep1a) (Mus musculus (Mouse)).